A 458-amino-acid polypeptide reads, in one-letter code: Zinc finger protein 239 (458 aa).

A Glycyl lysine isopeptide (Lys-Gly) (interchain with G-Cter in SUMO2) cross-link involves residue Lys108. The residue at position 191 (Ser191) is a Phosphoserine. C2H2-type zinc fingers lie at residues 207-229, 235-257, 263-285, 291-313, 319-341, 347-369, 375-397, 403-425, and 431-453; these read YECS…QRDH, YKCE…QAVH, YKCD…HAVH, YKCD…QRVH, YECE…QRVH, YKCG…RCIH, YQCY…LRVH, YHCG…QRVH, and YECS…QRVH.

The protein belongs to the krueppel C2H2-type zinc-finger protein family.

It is found in the nucleus. In terms of biological role, may be involved in transcriptional regulation. This is Zinc finger protein 239 (ZNF239) from Pongo abelii (Sumatran orangutan).